We begin with the raw amino-acid sequence, 890 residues long: Wolframin (890 aa).

Residue Met1 is modified to N-acetylmethionine. Residues 1-86 are disordered; it reads MDSNTAPLGP…TGPTKGDMEI (86 aa). Residues 1-321 form an interaction with ATP6V1A region; it reads MDSNTAPLGP…MHWLSTIIPT (321 aa). Over residues 10–20 the composition is skewed to pro residues; sequence PSCPQPPPAPQ. Thr30 is modified (phosphothreonine; by FAM20C). Ser32 is modified (phosphoserine; by FAM20C). Position 157 is a phosphoserine (Ser157). 10 helical membrane passes run 314–334, 340–360, 402–422, 427–447, 465–485, 496–516, 529–549, 563–583, 589–609, and 632–652; these read WLSTIIPTHHINALIFFFIVS, FFAFFIPLVIFYLSFISMVIC, LEPYAHFLLSVFFVIFSFPIA, IPCSELAVITGFFTVTSYLSL, AGLLSLLPSMPLNWPYLKVLG, LVVLNVSVPCLLYVYLLYLFF, CYLVPYLVCFMWCELSVVILL, YFLFLFALPILVAGLALVGVL, FTSLELTKIAVTVAVCSVPLL, and MVKLILVWLTAIVLFCWFYVY. The Lumenal portion of the chain corresponds to 653 to 869; sequence RSEGMKVYNS…HVKIEHDWRS (217 aa). N-linked (GlcNAc...) asparagine glycosylation is found at Asn661 and Asn746. A helical transmembrane segment spans residues 870–890; the sequence is TVHGAVKFAFDFFFFPFLSAA.

As to quaternary structure, interacts with ATP6V1A. Highly expressed in heart followed by brain, placenta, lung and pancreas. Weakly expressed in liver, kidney and skeletal muscle. Also expressed in islet and beta-cell insulinoma cell line.

The protein localises to the endoplasmic reticulum membrane. The protein resides in the cytoplasmic vesicle. It is found in the secretory vesicle. Participates in the regulation of cellular Ca(2+) homeostasis, at least partly, by modulating the filling state of the endoplasmic reticulum Ca(2+) store. Negatively regulates the ER stress response and positively regulates the stability of V-ATPase subunits ATP6V1A and ATP1B1 by preventing their degradation through an unknown proteasome-independent mechanism. The polypeptide is Wolframin (WFS1) (Homo sapiens (Human)).